Consider the following 236-residue polypeptide: 2-C-methyl-D-erythritol 4-phosphate cytidylyltransferase (236 aa).

The protein belongs to the IspD/TarI cytidylyltransferase family. IspD subfamily.

The catalysed reaction is 2-C-methyl-D-erythritol 4-phosphate + CTP + H(+) = 4-CDP-2-C-methyl-D-erythritol + diphosphate. Its pathway is isoprenoid biosynthesis; isopentenyl diphosphate biosynthesis via DXP pathway; isopentenyl diphosphate from 1-deoxy-D-xylulose 5-phosphate: step 2/6. Functionally, catalyzes the formation of 4-diphosphocytidyl-2-C-methyl-D-erythritol from CTP and 2-C-methyl-D-erythritol 4-phosphate (MEP). The chain is 2-C-methyl-D-erythritol 4-phosphate cytidylyltransferase from Burkholderia pseudomallei (strain 1106a).